Consider the following 161-residue polypeptide: E3 ubiquitin ligase complex SCF subunit sconC (161 aa).

The interval 102 to 161 (ILAANYLDIKGLLDVGCKTVANMIKGKSPEEIRKTFNIQNDFTPEEEDQIRRENEWAEDR) is interaction with the F-box domain of F-box proteins.

The protein belongs to the SKP1 family. Component of the SCF (SKP1-CUL1-F-box protein) E3 ubiquitin ligase complexes.

It participates in protein modification; protein ubiquitination. Essential component of the SCF (SKP1-CUL1-F-box protein) E3 ubiquitin ligase complexes, which mediate the ubiquitination and subsequent proteasomal degradation of target proteins. Controls sulfur metabolite repression, probably by mediating the inactivation or degradation of the metR transcription factor. The protein is E3 ubiquitin ligase complex SCF subunit sconC (sconC) of Aspergillus flavus (strain ATCC 200026 / FGSC A1120 / IAM 13836 / NRRL 3357 / JCM 12722 / SRRC 167).